The sequence spans 239 residues: Mannose-binding protein A (239 aa).

The first 18 residues, 1 to 18, serve as a signal peptide directing secretion; that stretch reads MLLLPLLPVLLCVVSVSS. The disordered stretch occupies residues 35–88; the sequence is ACGRDGRDGPKGEKGEPGQGLRGLQGPPGKLGPPGSVGSPGSPGPKGQKGDHGD. The region spanning 37 to 89 is the Collagen-like domain; it reads GRDGRDGPKGEKGEPGQGLRGLQGPPGKLGPPGSVGSPGSPGPKGQKGDHGDN. Basic and acidic residues predominate over residues 38-50; that stretch reads RDGRDGPKGEKGE. The residue at position 44 (Pro44) is a 4-hydroxyproline. 5-hydroxylysine occurs at positions 45 and 48. O-linked (Gal...) hydroxylysine glycans are attached at residues Lys45 and Lys48. Pro51, Pro62, Pro68, Pro74, and Pro79 each carry 4-hydroxyproline. Over residues 58–74 the composition is skewed to low complexity; the sequence is LQGPPGKLGPPGSVGSP. 5-hydroxylysine is present on residues Lys80 and Lys83. Residues Lys80 and Lys83 are each glycosylated (O-linked (Gal...) hydroxylysine). Residues 144–239 form the C-type lectin domain; that stretch reads SLCTELQGTV…SFKAVCEFPA (96 aa). Disulfide bonds link Cys146-Cys235 and Cys213-Cys227. Asp179, Glu183, Glu203, Asn205, Glu211, Asp212, Asn223, and Asp224 together coordinate Ca(2+). Positions 203–211 are calcium-dependent carbohydrate binding; that stretch reads EPNNHGSGE.

As to quaternary structure, homotrimer. Forms higher oligomeric complexes formed by the association of two, three or more homotrimers. Oligomerization occurs in the endoplasmic reticulum. Interacts with MASP1 and MASP2. Post-translationally, hydroxylated on lysine and proline residues within the collagen-like domain. O-glycosylated. O-linked glycans on hydroxylysine residues consist of Glc-Gal disaccharides bound to the oxygen atom of post-translationally added hydroxyl groups. In terms of tissue distribution, detected in liver and blood serum (at protein level). Detected in liver.

It is found in the secreted. Its function is as follows. Calcium-dependent lectin. Plays a role in the innate immune response by binding mannose, fucose and N-acetylglucosamine moieties on different microorganisms and mediating activation of the lectin complement pathway. Binds to late apoptotic cells, as well as to apoptotic blebs and to necrotic cells, but not to early apoptotic cells, facilitating their uptake by macrophages. The sequence is that of Mannose-binding protein A (Mbl1) from Mus musculus (Mouse).